The sequence spans 100 residues: Urease subunit gamma (100 aa).

This sequence belongs to the urease gamma subunit family. Heterotrimer of UreA (gamma), UreB (beta) and UreC (alpha) subunits. Three heterotrimers associate to form the active enzyme.

The protein resides in the cytoplasm. The catalysed reaction is urea + 2 H2O + H(+) = hydrogencarbonate + 2 NH4(+). Its pathway is nitrogen metabolism; urea degradation; CO(2) and NH(3) from urea (urease route): step 1/1. This chain is Urease subunit gamma, found in Opitutus terrae (strain DSM 11246 / JCM 15787 / PB90-1).